Here is a 973-residue protein sequence, read N- to C-terminus: Mediator of RNA polymerase II transcription subunit 16 (973 aa).

This sequence belongs to the Mediator complex subunit 16 family. In terms of assembly, component of the Mediator complex.

The protein localises to the nucleus. Functionally, component of the Mediator complex, a coactivator involved in the regulated transcription of nearly all RNA polymerase II-dependent genes. Mediator functions as a bridge to convey information from gene-specific regulatory proteins to the basal RNA polymerase II transcription machinery. Mediator is recruited to promoters by direct interactions with regulatory proteins and serves as a scaffold for the assembly of a functional preinitiation complex with RNA polymerase II and the general transcription factors. In Candida glabrata (strain ATCC 2001 / BCRC 20586 / JCM 3761 / NBRC 0622 / NRRL Y-65 / CBS 138) (Yeast), this protein is Mediator of RNA polymerase II transcription subunit 16 (SIN4).